The chain runs to 299 residues: Mitochondrial 2-oxodicarboxylate carrier (299 aa).

3 Solcar repeats span residues Arg11–Leu100, Ser107–Met196, and Leu205–Trp294. 6 helical membrane-spanning segments follow: residues Ile17–Val37, Phe70–Val89, Thr113–Val133, Gly167–Phe187, Leu205–Asn225, and Leu277–Glu297.

Belongs to the mitochondrial carrier (TC 2.A.29) family.

The protein localises to the mitochondrion inner membrane. The catalysed reaction is 2-oxoadipate(in) + 2-oxoglutarate(out) = 2-oxoadipate(out) + 2-oxoglutarate(in). It carries out the reaction hexanedioate(in) + 2-oxoglutarate(out) = hexanedioate(out) + 2-oxoglutarate(in). The enzyme catalyses L-2-aminoadipate(in) + 2-oxoglutarate(out) = L-2-aminoadipate(out) + 2-oxoglutarate(in). It catalyses the reaction glutarate(in) + 2-oxoglutarate(out) = glutarate(out) + 2-oxoglutarate(in). The catalysed reaction is 2-oxoheptanedioate(in) + 2-oxoglutarate(out) = 2-oxoheptanedioate(out) + 2-oxoglutarate(in). It carries out the reaction heptanedioate(in) + 2-oxoglutarate(out) = heptanedioate(out) + 2-oxoglutarate(in). The enzyme catalyses citrate(in) + 2-oxoglutarate(out) = citrate(out) + 2-oxoglutarate(in). Transports dicarboxylates across the inner membranes of mitochondria by a counter-exchange mechanism. Can transport 2-oxoadipate (2-oxohexanedioate), 2-oxoglutarate, adipate (hexanedioate), glutarate, and to a lesser extent, pimelate (heptanedioate), 2-oxopimelate (2-oxoheptanedioate), 2-aminoadipate (2-aminohexanedioate), oxaloacetate, and citrate. Plays a central role in catabolism of lysine, hydroxylysine, and tryptophan, by transporting common metabolite intermediates (such as 2-oxoadipate) into the mitochondria, where it is converted into acetyl-CoA and can enter the citric acid (TCA) cycle. The chain is Mitochondrial 2-oxodicarboxylate carrier (SLC25A21) from Pongo abelii (Sumatran orangutan).